Here is a 288-residue protein sequence, read N- to C-terminus: Fructokinase (288 aa).

ATP is bound at residue Thr131. The Zn(2+) site is built by His154, Cys169, His172, and Cys175. Residues Pro183 and 231 to 235 (GVMNQ) contribute to the ATP site.

It belongs to the ROK (NagC/XylR) family. Mg(2+) serves as cofactor.

It catalyses the reaction D-fructose + ATP = D-fructose 6-phosphate + ADP + H(+). Inhibition by zinc ions. In Pediococcus pentosaceus, this protein is Fructokinase (scrK).